The primary structure comprises 329 residues: 4-hydroxythreonine-4-phosphate dehydrogenase (329 aa).

The substrate site is built by H136 and T137. The a divalent metal cation site is built by H166, H211, and H266. The substrate site is built by K274, N283, and R292.

The protein belongs to the PdxA family. Homodimer. Requires Zn(2+) as cofactor. It depends on Mg(2+) as a cofactor. Co(2+) is required as a cofactor.

It is found in the cytoplasm. It catalyses the reaction 4-(phosphooxy)-L-threonine + NAD(+) = 3-amino-2-oxopropyl phosphate + CO2 + NADH. Its pathway is cofactor biosynthesis; pyridoxine 5'-phosphate biosynthesis; pyridoxine 5'-phosphate from D-erythrose 4-phosphate: step 4/5. Catalyzes the NAD(P)-dependent oxidation of 4-(phosphooxy)-L-threonine (HTP) into 2-amino-3-oxo-4-(phosphooxy)butyric acid which spontaneously decarboxylates to form 3-amino-2-oxopropyl phosphate (AHAP). This is 4-hydroxythreonine-4-phosphate dehydrogenase from Escherichia coli O81 (strain ED1a).